The chain runs to 196 residues: dITP/XTP pyrophosphatase (196 aa).

9-14 is a binding site for substrate; sequence TSNAGK. Mg(2+)-binding residues include Glu39 and Asp68. Asp68 serves as the catalytic Proton acceptor. Substrate is bound by residues Ser69, 147–150, Lys170, and 175–176; these read FGYD and HR.

It belongs to the HAM1 NTPase family. Homodimer. Mg(2+) serves as cofactor.

The catalysed reaction is XTP + H2O = XMP + diphosphate + H(+). It catalyses the reaction dITP + H2O = dIMP + diphosphate + H(+). It carries out the reaction ITP + H2O = IMP + diphosphate + H(+). In terms of biological role, pyrophosphatase that catalyzes the hydrolysis of nucleoside triphosphates to their monophosphate derivatives, with a high preference for the non-canonical purine nucleotides XTP (xanthosine triphosphate), dITP (deoxyinosine triphosphate) and ITP. Seems to function as a house-cleaning enzyme that removes non-canonical purine nucleotides from the nucleotide pool, thus preventing their incorporation into DNA/RNA and avoiding chromosomal lesions. This Nostoc sp. (strain PCC 7120 / SAG 25.82 / UTEX 2576) protein is dITP/XTP pyrophosphatase.